Consider the following 522-residue polypeptide: N-acetylgalactosamine-6-sulfatase (522 aa).

An N-terminal signal peptide occupies residues 1–26 (MAAVVAATRWWQLLLVLSAAGMGASG). The segment at 27-379 (APQPPNILLL…PTLLQGRLMD (353 aa)) is catalytic domain. Residues Asp-39, Asp-40, and Cys-79 each coordinate Ca(2+). Residue Cys-79 is the Nucleophile of the active site. Cys-79 carries the 3-oxoalanine (Cys) modification. His-142 is a catalytic residue. Asn-204 is a glycosylation site (N-linked (GlcNAc...) asparagine). Residues Asp-288 and Asn-289 each contribute to the Ca(2+) site. A disulfide bond links Cys-308 and Cys-419. A glycan (N-linked (GlcNAc...) asparagine) is linked at Asn-423. 2 disulfide bridges follow: Cys-489-Cys-518 and Cys-501-Cys-507.

This sequence belongs to the sulfatase family. Homodimer. It depends on Ca(2+) as a cofactor. The conversion to 3-oxoalanine (also known as C-formylglycine, FGly), of a serine or cysteine residue in prokaryotes and of a cysteine residue in eukaryotes, is critical for catalytic activity.

The protein resides in the lysosome. It carries out the reaction Hydrolysis of the 6-sulfate groups of the N-acetyl-D-galactosamine 6-sulfate units of chondroitin sulfate and of the D-galactose 6-sulfate units of keratan sulfate.. The protein is N-acetylgalactosamine-6-sulfatase (GALNS) of Homo sapiens (Human).